The sequence spans 75 residues: uncharacterized protein (75 aa).

This is an uncharacterized protein from Escherichia coli (Bacteriophage T4).